The following is a 78-amino-acid chain: Putative membrane protein insertion efficiency factor (78 aa).

Belongs to the UPF0161 family.

Its subcellular location is the cell membrane. In terms of biological role, could be involved in insertion of integral membrane proteins into the membrane. The chain is Putative membrane protein insertion efficiency factor from Bacillus mycoides (strain KBAB4) (Bacillus weihenstephanensis).